The chain runs to 60 residues: Ribosome biogenesis protein Nop10 (60 aa).

The segment at 37 to 60 (APAPFDPADPHGKYRRALKERRRL) is disordered. Positions 49–60 (KYRRALKERRRL) are enriched in basic residues.

It belongs to the NOP10 family.

Its function is as follows. Involved in ribosome biogenesis; more specifically in 18S rRNA pseudouridylation and in cleavage of pre-rRNA. The polypeptide is Ribosome biogenesis protein Nop10 (Halobacterium salinarum (strain ATCC 29341 / DSM 671 / R1)).